Consider the following 258-residue polypeptide: Ribosomal protein L11 methyltransferase (258 aa).

Thr117, Gly138, Asp160, and Asn201 together coordinate S-adenosyl-L-methionine.

This sequence belongs to the methyltransferase superfamily. PrmA family.

It localises to the cytoplasm. The enzyme catalyses L-lysyl-[protein] + 3 S-adenosyl-L-methionine = N(6),N(6),N(6)-trimethyl-L-lysyl-[protein] + 3 S-adenosyl-L-homocysteine + 3 H(+). In terms of biological role, methylates ribosomal protein L11. The polypeptide is Ribosomal protein L11 methyltransferase (Thermosipho melanesiensis (strain DSM 12029 / CIP 104789 / BI429)).